Consider the following 158-residue polypeptide: NAD(P)H-quinone oxidoreductase subunit J, chloroplastic (158 aa).

It belongs to the complex I 30 kDa subunit family. NDH is composed of at least 16 different subunits, 5 of which are encoded in the nucleus.

The protein localises to the plastid. The protein resides in the chloroplast thylakoid membrane. The catalysed reaction is a plastoquinone + NADH + (n+1) H(+)(in) = a plastoquinol + NAD(+) + n H(+)(out). The enzyme catalyses a plastoquinone + NADPH + (n+1) H(+)(in) = a plastoquinol + NADP(+) + n H(+)(out). NDH shuttles electrons from NAD(P)H:plastoquinone, via FMN and iron-sulfur (Fe-S) centers, to quinones in the photosynthetic chain and possibly in a chloroplast respiratory chain. The immediate electron acceptor for the enzyme in this species is believed to be plastoquinone. Couples the redox reaction to proton translocation, and thus conserves the redox energy in a proton gradient. The polypeptide is NAD(P)H-quinone oxidoreductase subunit J, chloroplastic (Aethionema grandiflorum (Persian stone-cress)).